Consider the following 272-residue polypeptide: D-aminoacyl-tRNA deacylase (272 aa).

As to quaternary structure, monomer. It depends on Zn(2+) as a cofactor.

The enzyme catalyses a D-aminoacyl-tRNA + H2O = a tRNA + a D-alpha-amino acid + H(+). It carries out the reaction glycyl-tRNA(Ala) + H2O = tRNA(Ala) + glycine + H(+). The catalysed reaction is D-tyrosyl-tRNA(Tyr) + H2O = D-tyrosine + tRNA(Tyr). Its function is as follows. D-aminoacyl-tRNA deacylase with broad substrate specificity. By recycling D-aminoacyl-tRNA to D-amino acids and free tRNA molecules, this enzyme counteracts the toxicity associated with the formation of D-aminoacyl-tRNA entities in vivo. Catalyzes the hydrolysis of D-tyrosyl-tRNA(Tyr) and D-aspartyl-tRNA(Asp). The chain is D-aminoacyl-tRNA deacylase from Pyrococcus abyssi (strain GE5 / Orsay).